The chain runs to 142 residues: PDZ domain-containing protein 11 (142 aa).

The PDZ domain occupies 49-131 (TIVLKKPPGA…ILMKVRYFPY (83 aa)).

Its subcellular location is the cytoplasm. The protein is PDZ domain-containing protein 11 (pdzd11) of Danio rerio (Zebrafish).